Consider the following 98-residue polypeptide: Large ribosomal subunit protein uL23 (98 aa).

It belongs to the universal ribosomal protein uL23 family. In terms of assembly, part of the 50S ribosomal subunit. Contacts protein L29, and trigger factor when it is bound to the ribosome.

One of the early assembly proteins it binds 23S rRNA. One of the proteins that surrounds the polypeptide exit tunnel on the outside of the ribosome. Forms the main docking site for trigger factor binding to the ribosome. This Methylobacterium sp. (strain 4-46) protein is Large ribosomal subunit protein uL23.